Reading from the N-terminus, the 203-residue chain is Endo-type membrane-bound lytic murein transglycosylase A (203 aa).

The first 15 residues, 1–15 (MKLRWLLILVVFLAG), serve as a signal peptide directing secretion. The N-palmitoyl cysteine moiety is linked to residue cysteine 16. Cysteine 16 carries S-diacylglycerol cysteine lipidation.

The protein belongs to the transglycosylase Slt family.

The protein resides in the cell outer membrane. It carries out the reaction Endolytic cleavage of the (1-&gt;4)-beta-glycosidic linkage between N-acetylmuramic acid (MurNAc) and N-acetylglucosamine (GlcNAc) residues in peptidoglycan with concomitant formation of a 1,6-anhydrobond in the MurNAc residue.. Murein-degrading enzyme. May play a role in recycling of muropeptides during cell elongation and/or cell division. Preferentially cleaves at a distance of more than two disaccharide units from the ends of the glycan chain. This is Endo-type membrane-bound lytic murein transglycosylase A from Klebsiella pneumoniae subsp. pneumoniae (strain ATCC 700721 / MGH 78578).